A 229-amino-acid chain; its full sequence is MSDNSKENLRQIKSYVQRAGRVTKKQQQALDDYASKYMIEYDQNKSLDFSEIFKNSNDVVLEIGFGMGGSLVQMALENPTKNYLGIEVHKAGVGNILYEIEHQNISNLLVMSHDAVEILENMISDNSLSGMQIYFPDPWHKKKHNKRRLVNQSNVDLFAKKLKVGGVFHYASDWLPYAEEVLELLENDNKYKNLYDGFAPRPEWRPLTKFEKRGQNLDHPISDILFEKI.

S-adenosyl-L-methionine-binding residues include E62, E87, D114, and D137. The active site involves D137. K141 is a substrate binding site. The interaction with RNA stretch occupies residues 143 to 148 (KHNKRR). Substrate contacts are provided by residues D173 and 208–211 (TKFE).

This sequence belongs to the class I-like SAM-binding methyltransferase superfamily. TrmB family.

The catalysed reaction is guanosine(46) in tRNA + S-adenosyl-L-methionine = N(7)-methylguanosine(46) in tRNA + S-adenosyl-L-homocysteine. It participates in tRNA modification; N(7)-methylguanine-tRNA biosynthesis. Catalyzes the formation of N(7)-methylguanine at position 46 (m7G46) in tRNA. The polypeptide is tRNA (guanine-N(7)-)-methyltransferase (Francisella philomiragia subsp. philomiragia (strain ATCC 25017 / CCUG 19701 / FSC 153 / O#319-036)).